Reading from the N-terminus, the 299-residue chain is Protoheme IX farnesyltransferase (299 aa).

A run of 9 helical transmembrane segments spans residues 25–45 (VVLL…RAGV), 47–67 (WTVL…AAAV), 95–115 (AAAL…LLTF), 119–139 (LAAW…TGFL), 147–167 (IVIG…AVTG), 173–193 (PLLL…ALAI), 218–238 (VHIL…FAIH), 243–263 (LYLA…IALY), and 277–297 (FSIW…YLLL).

It belongs to the UbiA prenyltransferase family. Protoheme IX farnesyltransferase subfamily.

Its subcellular location is the cell inner membrane. The catalysed reaction is heme b + (2E,6E)-farnesyl diphosphate + H2O = Fe(II)-heme o + diphosphate. It functions in the pathway porphyrin-containing compound metabolism; heme O biosynthesis; heme O from protoheme: step 1/1. In terms of biological role, converts heme B (protoheme IX) to heme O by substitution of the vinyl group on carbon 2 of heme B porphyrin ring with a hydroxyethyl farnesyl side group. This Stutzerimonas stutzeri (strain A1501) (Pseudomonas stutzeri) protein is Protoheme IX farnesyltransferase.